We begin with the raw amino-acid sequence, 252 residues long: Hydroxyacylglutathione hydrolase (252 aa).

The Zn(2+) site is built by His-54, His-56, Asp-58, His-59, His-111, Asp-128, and His-166.

This sequence belongs to the metallo-beta-lactamase superfamily. Glyoxalase II family. In terms of assembly, monomer. The cofactor is Zn(2+).

The catalysed reaction is an S-(2-hydroxyacyl)glutathione + H2O = a 2-hydroxy carboxylate + glutathione + H(+). It participates in secondary metabolite metabolism; methylglyoxal degradation; (R)-lactate from methylglyoxal: step 2/2. Functionally, thiolesterase that catalyzes the hydrolysis of S-D-lactoyl-glutathione to form glutathione and D-lactic acid. The chain is Hydroxyacylglutathione hydrolase from Aliivibrio salmonicida (strain LFI1238) (Vibrio salmonicida (strain LFI1238)).